We begin with the raw amino-acid sequence, 164 residues long: Phosphopantetheine adenylyltransferase (164 aa).

S11 serves as a coordination point for substrate. ATP-binding positions include 11–12 (SF) and H19. K43, A76, and R90 together coordinate substrate. Residues 91–93 (GLR), E101, and 126–132 (YQHISSS) contribute to the ATP site.

It belongs to the bacterial CoaD family. Homohexamer. Mg(2+) serves as cofactor.

It localises to the cytoplasm. The catalysed reaction is (R)-4'-phosphopantetheine + ATP + H(+) = 3'-dephospho-CoA + diphosphate. It participates in cofactor biosynthesis; coenzyme A biosynthesis; CoA from (R)-pantothenate: step 4/5. Functionally, reversibly transfers an adenylyl group from ATP to 4'-phosphopantetheine, yielding dephospho-CoA (dPCoA) and pyrophosphate. This is Phosphopantetheine adenylyltransferase from Streptococcus sanguinis (strain SK36).